Consider the following 185-residue polypeptide: Bcl-2-like protein 10 (185 aa).

The BH1 signature appears at 76 to 95 (LSNDQEFNWGRLVMLLAFVG). Residues 138-149 (WLEAHGGWDGFC) carry the BH2 motif. A helical membrane pass occupies residues 160-182 (FWRRLLIRAILSCFFATAIFYIW).

It belongs to the Bcl-2 family. As to quaternary structure, interacts with BAX. Interacts with BCL2, BCL2L1/BCLX. Interacts with APAF1. Interacts with ITPR1, ITPR2 and ITPR3; the interaction with ITPR1 is increased in the presence of AHCLY1. Interacts with AHCYL1. Interacts with HIP1R (via ENTH and I/LWEQ domains). Interacts with CASP9. Interacts with BCL2L11/BIM. Interacts with BIK. Interacts with UBQLN4. Interacts with NME2/NM23-H2. Interacts with and PMAIP1/NOXA. Interacts with TPX2. Interacts with UBQLN1; in the cytoplasm. Interacts (via BH1 domain) with BECN1. Ca(2+) is required as a cofactor. Post-translationally, monoubiquitinated by UBQLN1; results in stabilization of BCL2L10 protein abundance and in relocalization from mitochondria to cytoplasm. As to expression, expressed in oligodendroglial lineage cells.

The protein resides in the mitochondrion. The protein localises to the nucleus membrane. It is found in the endoplasmic reticulum. It localises to the cytoplasm. Its subcellular location is the cytoskeleton. The protein resides in the spindle. Its function is as follows. Promotes cell survival by suppressing apoptosis induced by BAX but not BAK. Increases binding of AHCYL1/IRBIT to ITPR1. Reduces ITPR1-mediated calcium release from the endoplasmic reticulum cooperatively with AHCYL1/IRBIT under normal cellular conditions. Under apoptotic stress conditions, dissociates from ITPR1 and is displaced from mitochondria-associated endoplasmic reticulum membranes, leading to increased Ca(2+) transfer to mitochondria which promotes apoptosis. Required for the correct formation of the microtubule organizing center during oocyte cell division, potentially via regulation of protein abundance and localization of other microtubule organizing center components such as AURKA and TPX2. The chain is Bcl-2-like protein 10 from Rattus norvegicus (Rat).